A 460-amino-acid polypeptide reads, in one-letter code: Probable carboxypeptidase ARB_01041 (460 aa).

A signal peptide spans 1–22 (MQKTYIWALVSLLASSLVDARS). The N-linked (GlcNAc...) asparagine glycan is linked to asparagine 98. Zn(2+) is bound at residue aspartate 175. Catalysis depends on glutamate 207, which acts as the Proton acceptor. Glutamate 208 provides a ligand contact to Zn(2+). The N-linked (GlcNAc...) asparagine glycan is linked to asparagine 395.

This sequence belongs to the peptidase M20A family. Zn(2+) is required as a cofactor.

The protein localises to the secreted. In Arthroderma benhamiae (strain ATCC MYA-4681 / CBS 112371) (Trichophyton mentagrophytes), this protein is Probable carboxypeptidase ARB_01041.